A 1112-amino-acid polypeptide reads, in one-letter code: Carbamoyl phosphate synthase large chain (1112 aa).

The tract at residues 1–407 (MPRRTDLRHV…ALGKVMRSLE (407 aa)) is carboxyphosphate synthetic domain. Positions 134, 174, 180, 181, 213, 215, 220, 246, 247, 248, 290, and 304 each coordinate ATP. Residues 138–333 (KDIVTKVGGE…IAKIAAKLAI (196 aa)) form the ATP-grasp 1 domain. Residues Gln290, Glu304, and Asn306 each contribute to the Mg(2+) site. Mn(2+) contacts are provided by Gln290, Glu304, and Asn306. Positions 408–559 (TGRAGFWTAP…ELDPAAESEV (152 aa)) are oligomerization domain. Residues 560 to 965 (APQAERPKVL…AFAKSQTAAY (406 aa)) form a carbamoyl phosphate synthetic domain region. Positions 693–884 (GEVLRTAGLP…LAKACARIML (192 aa)) constitute an ATP-grasp 2 domain. 10 residues coordinate ATP: Arg729, Arg768, Leu770, Glu775, Gly800, Ile801, His802, Ser803, Gln843, and Glu855. Positions 843, 855, and 857 each coordinate Mg(2+). Mn(2+) contacts are provided by Gln843, Glu855, and Asn857. Residues 966–1112 (GSLPSEGTVF…LQELHSELGN (147 aa)) enclose the MGS-like domain. An allosteric domain region spans residues 966–1112 (GSLPSEGTVF…LQELHSELGN (147 aa)).

It belongs to the CarB family. As to quaternary structure, composed of two chains; the small (or glutamine) chain promotes the hydrolysis of glutamine to ammonia, which is used by the large (or ammonia) chain to synthesize carbamoyl phosphate. Tetramer of heterodimers (alpha,beta)4. Mg(2+) is required as a cofactor. It depends on Mn(2+) as a cofactor.

The catalysed reaction is hydrogencarbonate + L-glutamine + 2 ATP + H2O = carbamoyl phosphate + L-glutamate + 2 ADP + phosphate + 2 H(+). It carries out the reaction hydrogencarbonate + NH4(+) + 2 ATP = carbamoyl phosphate + 2 ADP + phosphate + 2 H(+). Its pathway is amino-acid biosynthesis; L-arginine biosynthesis; carbamoyl phosphate from bicarbonate: step 1/1. It participates in pyrimidine metabolism; UMP biosynthesis via de novo pathway; (S)-dihydroorotate from bicarbonate: step 1/3. Its function is as follows. Large subunit of the glutamine-dependent carbamoyl phosphate synthetase (CPSase). CPSase catalyzes the formation of carbamoyl phosphate from the ammonia moiety of glutamine, carbonate, and phosphate donated by ATP, constituting the first step of 2 biosynthetic pathways, one leading to arginine and/or urea and the other to pyrimidine nucleotides. The large subunit (synthetase) binds the substrates ammonia (free or transferred from glutamine from the small subunit), hydrogencarbonate and ATP and carries out an ATP-coupled ligase reaction, activating hydrogencarbonate by forming carboxy phosphate which reacts with ammonia to form carbamoyl phosphate. The sequence is that of Carbamoyl phosphate synthase large chain from Mycobacterium sp. (strain JLS).